Here is a 933-residue protein sequence, read N- to C-terminus: Isoleucine--tRNA ligase (933 aa).

The short motif at 57–67 (PYANGNIHVGH) is the 'HIGH' region element. Glutamate 554 contributes to the L-isoleucyl-5'-AMP binding site. A 'KMSKS' region motif is present at residues 595–599 (KMSKS). Lysine 598 contacts ATP.

This sequence belongs to the class-I aminoacyl-tRNA synthetase family. IleS type 1 subfamily. In terms of assembly, monomer.

The protein localises to the cytoplasm. It carries out the reaction tRNA(Ile) + L-isoleucine + ATP = L-isoleucyl-tRNA(Ile) + AMP + diphosphate. Its function is as follows. Catalyzes the attachment of isoleucine to tRNA(Ile). As IleRS can inadvertently accommodate and process structurally similar amino acids such as valine, to avoid such errors it has two additional distinct tRNA(Ile)-dependent editing activities. One activity is designated as 'pretransfer' editing and involves the hydrolysis of activated Val-AMP. The other activity is designated 'posttransfer' editing and involves deacylation of mischarged Val-tRNA(Ile). This chain is Isoleucine--tRNA ligase, found in Streptococcus pyogenes serotype M6 (strain ATCC BAA-946 / MGAS10394).